Reading from the N-terminus, the 188-residue chain is Elongation factor P (188 aa).

N6-(3,6-diaminohexanoyl)-5-hydroxylysine is present on Lys34.

The protein belongs to the elongation factor P family. May be beta-lysylated on the epsilon-amino group of Lys-34 by the combined action of EpmA and EpmB, and then hydroxylated on the C5 position of the same residue by EpmC (if this protein is present). Lysylation is critical for the stimulatory effect of EF-P on peptide-bond formation. The lysylation moiety may extend toward the peptidyltransferase center and stabilize the terminal 3-CCA end of the tRNA. Hydroxylation of the C5 position on Lys-34 may allow additional potential stabilizing hydrogen-bond interactions with the P-tRNA.

It localises to the cytoplasm. The protein operates within protein biosynthesis; polypeptide chain elongation. Involved in peptide bond synthesis. Alleviates ribosome stalling that occurs when 3 or more consecutive Pro residues or the sequence PPG is present in a protein, possibly by augmenting the peptidyl transferase activity of the ribosome. Modification of Lys-34 is required for alleviation. The protein is Elongation factor P of Citrobacter koseri (strain ATCC BAA-895 / CDC 4225-83 / SGSC4696).